A 130-amino-acid chain; its full sequence is MSLMDPLANALNHISNCEGVGKSVAYVKPASKLIGRVLNVMQDHGYIGNFEYIEDGRAGIYKVELIGQINKCGAVKPRYAVKKQEFEKFEKRYLPAKGFGLLIVSTPKGLMTHDEAKNQGLGGRLISYVF.

This sequence belongs to the universal ribosomal protein uS8 family. In terms of assembly, part of the 30S ribosomal subunit.

Its function is as follows. One of the primary rRNA binding proteins, it binds directly to 16S rRNA central domain where it helps coordinate assembly of the platform of the 30S subunit. The protein is Small ribosomal subunit protein uS8 of Methanothermococcus thermolithotrophicus (Methanococcus thermolithotrophicus).